The sequence spans 86 residues: Weak toxin 1 (86 aa).

A signal peptide spans 1–23; it reads MKTLLLTLVVVAIVCLDLGYTLT. Intrachain disulfides connect Cys-24–Cys-45, Cys-27–Cys-32, Cys-38–Cys-63, Cys-67–Cys-78, and Cys-79–Cys-84.

The protein belongs to the three-finger toxin family. Ancestral subfamily. Orphan group II sub-subfamily. Expressed by the venom gland.

The protein localises to the secreted. Binds with low affinity to muscular (alpha-1-beta-1-delta-epsilon/CHRNA1-CHRNB1-CHRND-CHRNE) and very low affinity to neuronal (alpha-7/CHRNA7) nicotinic acetylcholine receptor (nAChR). This is Weak toxin 1 from Bungarus candidus (Malayan krait).